The primary structure comprises 125 residues: Small ribosomal subunit protein bS16 (125 aa).

Residues 87 to 125 (EGKKKQALARQSASKKAVKEKTEESKGSEVDSETSTSAD) are disordered. Residues 103 to 115 (AVKEKTEESKGSE) show a composition bias toward basic and acidic residues.

This sequence belongs to the bacterial ribosomal protein bS16 family.

The polypeptide is Small ribosomal subunit protein bS16 (Prochlorococcus marinus (strain MIT 9211)).